Reading from the N-terminus, the 981-residue chain is Transcription factor TAC1 (981 aa).

A compositionally biased stretch (polar residues) spans methionine 1 to asparagine 29. The segment at methionine 1–arginine 33 is disordered. Residues cysteine 40–cysteine 68 constitute a DNA-binding region (zn(2)-C6 fungal-type). Disordered regions lie at residues proline 74–glycine 106, histidine 165–serine 199, and leucine 868–threonine 902. The segment covering histidine 165–serine 177 has biased composition (low complexity). Residues leucine 868–methionine 880 show a composition bias toward polar residues. Low complexity predominate over residues asparagine 881–threonine 902.

Phosphorylated. Phosphorylation leads to hyperactivation.

The protein resides in the nucleus. Drugs such as farnesol and 1-dodecanol are able to hyperactivate TAC1 probably via phosphorylation by the Mediator complex. Its function is as follows. Transcriptional activator of drug-responsive genes including the ABC-type transporters CDR1 and CDR2, as well as HSP12 and RTA3. Binds the cis-acting regulatory drug-responsive elements (DREs) with the consensus sequence 5'-CGGAWATCGGATATTTTTTT-3' in the promoters of target genes. The protein is Transcription factor TAC1 of Candida albicans (strain SC5314 / ATCC MYA-2876) (Yeast).